The following is a 441-amino-acid chain: tRNA modification GTPase MnmE (441 aa).

R23, E81, and K121 together coordinate (6S)-5-formyl-5,6,7,8-tetrahydrofolate. A TrmE-type G domain is found at 218 to 363; sequence GFRVAIVGPP…LESWIAAFVS (146 aa). N228 contributes to the K(+) binding site. GTP is bound by residues 228–233, 247–253, 272–275, and 326–329; these read NAGKSS, TDIAGTT, DTAG, and NKAD. S232 contributes to the Mg(2+) binding site. 3 residues coordinate K(+): T247, I249, and T252. Residue T253 participates in Mg(2+) binding. K441 lines the (6S)-5-formyl-5,6,7,8-tetrahydrofolate pocket.

Belongs to the TRAFAC class TrmE-Era-EngA-EngB-Septin-like GTPase superfamily. TrmE GTPase family. As to quaternary structure, homodimer. Heterotetramer of two MnmE and two MnmG subunits. K(+) serves as cofactor.

The protein resides in the cytoplasm. Functionally, exhibits a very high intrinsic GTPase hydrolysis rate. Involved in the addition of a carboxymethylaminomethyl (cmnm) group at the wobble position (U34) of certain tRNAs, forming tRNA-cmnm(5)s(2)U34. This is tRNA modification GTPase MnmE from Hyphomonas neptunium (strain ATCC 15444).